The following is a 426-amino-acid chain: 3-phosphoshikimate 1-carboxyvinyltransferase (426 aa).

Residues lysine 22, serine 23, and arginine 27 each contribute to the 3-phosphoshikimate site. A phosphoenolpyruvate-binding site is contributed by lysine 22. Residues glycine 96 and arginine 124 each coordinate phosphoenolpyruvate. Serine 170, serine 171, glutamine 172, serine 198, aspartate 314, asparagine 337, and lysine 341 together coordinate 3-phosphoshikimate. Residue glutamine 172 participates in phosphoenolpyruvate binding. Aspartate 314 acts as the Proton acceptor in catalysis. 3 residues coordinate phosphoenolpyruvate: arginine 345, arginine 387, and lysine 412.

It belongs to the EPSP synthase family. Monomer.

It localises to the cytoplasm. The catalysed reaction is 3-phosphoshikimate + phosphoenolpyruvate = 5-O-(1-carboxyvinyl)-3-phosphoshikimate + phosphate. It participates in metabolic intermediate biosynthesis; chorismate biosynthesis; chorismate from D-erythrose 4-phosphate and phosphoenolpyruvate: step 6/7. In terms of biological role, catalyzes the transfer of the enolpyruvyl moiety of phosphoenolpyruvate (PEP) to the 5-hydroxyl of shikimate-3-phosphate (S3P) to produce enolpyruvyl shikimate-3-phosphate and inorganic phosphate. The polypeptide is 3-phosphoshikimate 1-carboxyvinyltransferase (Colwellia psychrerythraea (strain 34H / ATCC BAA-681) (Vibrio psychroerythus)).